The chain runs to 188 residues: uncharacterized protein (188 aa).

3 consecutive transmembrane segments (helical) span residues 6-26 (MIVFMLLMVEIVSFVILSLPL), 43-63 (FAGRVKHVLKITIICILILFA), and 110-130 (ALFLSLVVNRYYLALEAMIAA).

It is found in the membrane. This is an uncharacterized protein from Schizosaccharomyces pombe (strain 972 / ATCC 24843) (Fission yeast).